Here is a 355-residue protein sequence, read N- to C-terminus: Protein pelota homolog (355 aa).

The protein belongs to the eukaryotic release factor 1 family. Pelota subfamily. As to quaternary structure, monomer. A divalent metal cation serves as cofactor.

It is found in the cytoplasm. Its function is as follows. May function in recognizing stalled ribosomes, interact with stem-loop structures in stalled mRNA molecules, and effect endonucleolytic cleavage of the mRNA. May play a role in the release non-functional ribosomes and degradation of damaged mRNAs. Has endoribonuclease activity. This chain is Protein pelota homolog, found in Halorubrum lacusprofundi (strain ATCC 49239 / DSM 5036 / JCM 8891 / ACAM 34).